The following is a 140-amino-acid chain: Inner membrane protein YphA (140 aa).

Over 1–13 (MNTLRYFDFGAAR) the chain is Cytoplasmic. Residues 14–34 (PVLLLIARIAVVLIFIIFGFP) form a helical membrane-spanning segment. Residues 35 to 56 (KMMGFDGTVQYMASLGAPMPML) are Periplasmic-facing. The helical transmembrane segment at 57–77 (AAIIAVVMEVPAAILIVLGFF) threads the bilayer. At 78-79 (TR) the chain is on the cytoplasmic side. The chain crosses the membrane as a helical span at residues 80–100 (PLAVLFIFYTLGTAVIGHHYW). Over 101 to 116 (DMTGDAVGPNMINFWK) the chain is Periplasmic. The chain crosses the membrane as a helical span at residues 117-137 (NVSIAGAFLLLAITGPGAISL). Residues 138 to 140 (DRR) lie on the Cytoplasmic side of the membrane.

Belongs to the DoxX family.

It is found in the cell inner membrane. This is Inner membrane protein YphA (yphA) from Escherichia coli (strain K12).